Here is a 202-residue protein sequence, read N- to C-terminus: MESKEQHLIRQYFILAMFFLFLAGCAQKRSLETTTYENWKTHLAEQSIWQVEGKLAFISPDERQSANLNWQQSQNNNNLVLTTFIGTRILSLKQTANTAELNYDGEQYFDTNATALLKRLTGFALPVNNADSWLKGTIDDQTLKVDQLGRAKSVLWFDSTGKKWQIEYASFVQKSGYWLPSRLTLTHQKIKIKIQLYDWQFN.

The signal sequence occupies residues 1 to 24 (MESKEQHLIRQYFILAMFFLFLAG). Residue cysteine 25 is the site of N-palmitoyl cysteine attachment. Residue cysteine 25 is the site of S-diacylglycerol cysteine attachment.

Belongs to the LolB family. Monomer.

Its subcellular location is the cell outer membrane. Plays a critical role in the incorporation of lipoproteins in the outer membrane after they are released by the LolA protein. This Pseudoalteromonas translucida (strain TAC 125) protein is Outer-membrane lipoprotein LolB.